The following is a 501-amino-acid chain: ATP synthase subunit alpha (501 aa).

An ATP-binding site is contributed by 169 to 176 (GDRQTGKT).

This sequence belongs to the ATPase alpha/beta chains family. In terms of assembly, F-type ATPases have 2 components, CF(1) - the catalytic core - and CF(0) - the membrane proton channel. CF(1) has five subunits: alpha(3), beta(3), gamma(1), delta(1), epsilon(1). CF(0) has three main subunits: a(1), b(2) and c(9-12). The alpha and beta chains form an alternating ring which encloses part of the gamma chain. CF(1) is attached to CF(0) by a central stalk formed by the gamma and epsilon chains, while a peripheral stalk is formed by the delta and b chains.

The protein localises to the cell membrane. It carries out the reaction ATP + H2O + 4 H(+)(in) = ADP + phosphate + 5 H(+)(out). Functionally, produces ATP from ADP in the presence of a proton gradient across the membrane. The alpha chain is a regulatory subunit. The protein is ATP synthase subunit alpha of Streptococcus pneumoniae (strain Hungary19A-6).